Here is a 263-residue protein sequence, read N- to C-terminus: Tryptophan synthase alpha chain (263 aa).

Catalysis depends on proton acceptor residues Glu47 and Asp58.

This sequence belongs to the TrpA family. As to quaternary structure, tetramer of two alpha and two beta chains.

It is found in the plastid. Its subcellular location is the chloroplast. The enzyme catalyses (1S,2R)-1-C-(indol-3-yl)glycerol 3-phosphate + L-serine = D-glyceraldehyde 3-phosphate + L-tryptophan + H2O. It functions in the pathway amino-acid biosynthesis; L-tryptophan biosynthesis; L-tryptophan from chorismate: step 5/5. The alpha subunit is responsible for the aldol cleavage of indoleglycerol phosphate to indole and glyceraldehyde 3-phosphate. The sequence is that of Tryptophan synthase alpha chain from Antithamnion sp. (Red alga).